A 158-amino-acid chain; its full sequence is 18.1 kDa class I heat shock protein (158 aa).

A sHSP domain is found at 44 to 158 (ENPAFVSTRV…AEVKSIEISG (115 aa)).

The protein belongs to the small heat shock protein (HSP20) family. Forms oligomeric structures.

Its subcellular location is the cytoplasm. This is 18.1 kDa class I heat shock protein (HSP18.1) from Pisum sativum (Garden pea).